The chain runs to 563 residues: Tripeptidyl-peptidase 1 (563 aa).

The first 19 residues, 1 to 19 (MRLRTCLLGLLALCVASKC), serve as a signal peptide directing secretion. Residues 20-195 (SYSPEPDQQR…PEPQVSGTVG (176 aa)) constitute a propeptide, removed in mature form. C111 and C122 are joined by a disulfide. The Peptidase S53 domain maps to 199 to 563 (GVTPSVIRQR…PALLKALIKP (365 aa)). Residues N210 and N222 are each glycosylated (N-linked (GlcNAc...) asparagine). Active-site charge relay system residues include E272 and D276. Residues N286, N313, and N443 are each glycosylated (N-linked (GlcNAc...) asparagine). Disulfide bonds link C365/C526 and C522/C537. S475 serves as the catalytic Charge relay system. Residues D517 and V518 each contribute to the Ca(2+) site. The Ca(2+) site is built by G539, G541, and D543.

Monomer. Interacts with CLN5. Interacts with CLN3. It depends on Ca(2+) as a cofactor. In terms of processing, activated by autocatalytic proteolytical processing upon acidification. N-glycosylation is required for processing and activity.

It is found in the lysosome. It localises to the melanosome. The catalysed reaction is Release of an N-terminal tripeptide from a polypeptide, but also has endopeptidase activity.. Functionally, lysosomal serine protease with tripeptidyl-peptidase I activity. May act as a non-specific lysosomal peptidase which generates tripeptides from the breakdown products produced by lysosomal proteinases. Requires substrates with an unsubstituted N-terminus. The chain is Tripeptidyl-peptidase 1 (TPP1) from Canis lupus familiaris (Dog).